A 442-amino-acid polypeptide reads, in one-letter code: MAIHRTVLMCLGLPLFLLPGARAQEQAPPGCSPDLNPLYYNLCDRSEAWGIILEAVAGAGVVTTFVLTIILVASLPFVQDTKKRSLLGTQVFFLLGTLGLFCLVFACVVKPSFSTCASRRFLFGVLFAICFSCLVAHVLALHFLVRKNHGPRGWVIFLVALLLSLVEVIINTEWLIITLVRGAGTEGDALGNGSAGWVAVSPCAIANADFVMALIYVMLLLLCAFSGAWSALCGRFKRWRKHGVFILLTTTASIAVWVVWIVMYTYGNRQHNSPTWDDPTLAIALATNAWAFVLFYVIPEVSQVTRSSPEQSYQGDLYPTRGVGYETILKEQKGQSMFVENKAFSMDEPASAKRPVSPYSGYNGQLLTSMYQPTEMTLMHKAPSDGAYDVILPRATANSQVTGSANSTLRAEDIYAAQGRQEATLPKEGKNSQVFRNPYVWD.

An N-terminal signal peptide occupies residues 1–23 (MAIHRTVLMCLGLPLFLLPGARA). Topologically, residues 24-50 (QEQAPPGCSPDLNPLYYNLCDRSEAWG) are extracellular. The helical transmembrane segment at 51–71 (IILEAVAGAGVVTTFVLTIIL) threads the bilayer. Residues 72 to 85 (VASLPFVQDTKKRS) lie on the Cytoplasmic side of the membrane. A helical membrane pass occupies residues 86-106 (LLGTQVFFLLGTLGLFCLVFA). The Extracellular segment spans residues 107–120 (CVVKPSFSTCASRR). A helical membrane pass occupies residues 121–141 (FLFGVLFAICFSCLVAHVLAL). The Cytoplasmic segment spans residues 142–155 (HFLVRKNHGPRGWV). The chain crosses the membrane as a helical span at residues 156–176 (IFLVALLLSLVEVIINTEWLI). Residues 177–209 (ITLVRGAGTEGDALGNGSAGWVAVSPCAIANAD) lie on the Extracellular side of the membrane. The N-linked (GlcNAc...) asparagine glycan is linked to Asn192. The chain crosses the membrane as a helical span at residues 210 to 230 (FVMALIYVMLLLLCAFSGAWS). At 231–242 (ALCGRFKRWRKH) the chain is on the cytoplasmic side. Residues 243-263 (GVFILLTTTASIAVWVVWIVM) form a helical membrane-spanning segment. The Extracellular portion of the chain corresponds to 264 to 280 (YTYGNRQHNSPTWDDPT). The chain crosses the membrane as a helical span at residues 281 to 301 (LAIALATNAWAFVLFYVIPEV). The Cytoplasmic portion of the chain corresponds to 302 to 442 (SQVTRSSPEQ…QVFRNPYVWD (141 aa)). Residues Ser345, Ser384, Ser404, and Ser407 each carry the phosphoserine modification. A Phosphotyrosine modification is found at Tyr415. Phosphothreonine is present on Thr424.

It belongs to the G-protein coupled receptor 3 family.

The protein localises to the cell membrane. In terms of biological role, this retinoic acid-inducible G-protein coupled receptor provide evidence for a possible interaction between retinoid and G-protein signaling pathways. This is G-protein coupled receptor family C group 5 member C (GPRC5C) from Bos taurus (Bovine).